We begin with the raw amino-acid sequence, 200 residues long: Glycerol-3-phosphate acyltransferase (200 aa).

A run of 5 helical transmembrane segments spans residues 2–22 (IHLL…AVIV), 51–71 (TAAI…VVAA), 84–104 (IVLL…FFGF), 113–133 (ALGI…ATWV), and 143–163 (SLSA…LLGW).

Belongs to the PlsY family. Probably interacts with PlsX.

Its subcellular location is the cell inner membrane. The enzyme catalyses an acyl phosphate + sn-glycerol 3-phosphate = a 1-acyl-sn-glycero-3-phosphate + phosphate. The protein operates within lipid metabolism; phospholipid metabolism. In terms of biological role, catalyzes the transfer of an acyl group from acyl-phosphate (acyl-PO(4)) to glycerol-3-phosphate (G3P) to form lysophosphatidic acid (LPA). This enzyme utilizes acyl-phosphate as fatty acyl donor, but not acyl-CoA or acyl-ACP. The protein is Glycerol-3-phosphate acyltransferase of Thiobacillus denitrificans (strain ATCC 25259 / T1).